Reading from the N-terminus, the 136-residue chain is Protein NrdI (136 aa).

This sequence belongs to the NrdI family.

Its function is as follows. Probably involved in ribonucleotide reductase function. This chain is Protein NrdI, found in Enterobacter sp. (strain 638).